Consider the following 386-residue polypeptide: Phosphoglycerate kinase (386 aa).

Residues 21 to 23, arginine 36, 59 to 62, arginine 112, and arginine 145 contribute to the substrate site; these read DLN and HLGR. ATP is bound by residues lysine 196, glutamate 313, and 339–342; that span reads GGDT.

The protein belongs to the phosphoglycerate kinase family. Monomer.

The protein resides in the cytoplasm. The catalysed reaction is (2R)-3-phosphoglycerate + ATP = (2R)-3-phospho-glyceroyl phosphate + ADP. It functions in the pathway carbohydrate degradation; glycolysis; pyruvate from D-glyceraldehyde 3-phosphate: step 2/5. This chain is Phosphoglycerate kinase (pgk), found in Haemophilus influenzae (strain ATCC 51907 / DSM 11121 / KW20 / Rd).